The following is a 259-amino-acid chain: MNYTKVYNNLIKKGKLRKLDKSKLNFYTEKHHIIPSCIGGNDDSDNLVLLTAREHFIAHWLLAKIHYNSPGLIYAWWSFYNFGEDSLGRNLKLTSRGYQLVREKFSKIHSNTMKEMWKSNEYREKRSITLSLPEIRAKISESQLEAQNKPEVKEKISKGVKAAFKRPGVKEKHSAAVKKSLNNFEAKKKQSNSSKIRQRTGKHWQDYDLLYKLWIKLNRPKRGSFGTYISKLGYPKSNYHRLIVQFNEDYERSNNENCS.

To phage T4 mobB and mobC.

This Enterobacteria phage T4 (Bacteriophage T4) protein is Probable mobile endonuclease D (mobD).